The chain runs to 445 residues: Phosphoglucosamine mutase (445 aa).

Serine 102 acts as the Phosphoserine intermediate in catalysis. Mg(2+) is bound by residues serine 102, aspartate 241, aspartate 243, and aspartate 245. At serine 102 the chain carries Phosphoserine.

The protein belongs to the phosphohexose mutase family. It depends on Mg(2+) as a cofactor. Post-translationally, activated by phosphorylation.

The enzyme catalyses alpha-D-glucosamine 1-phosphate = D-glucosamine 6-phosphate. In terms of biological role, catalyzes the conversion of glucosamine-6-phosphate to glucosamine-1-phosphate. This is Phosphoglucosamine mutase from Shigella boydii serotype 4 (strain Sb227).